Reading from the N-terminus, the 569-residue chain is Dihydroxy-acid dehydratase (569 aa).

A [2Fe-2S] cluster-binding site is contributed by Cys-61. Residue Asp-93 participates in Mg(2+) binding. Cys-134 is a [2Fe-2S] cluster binding site. Asp-135 and Lys-136 together coordinate Mg(2+). Residue Lys-136 is modified to N6-carboxylysine. Cys-211 serves as a coordination point for [2Fe-2S] cluster. Residue Glu-462 coordinates Mg(2+). Ser-488 serves as the catalytic Proton acceptor.

Belongs to the IlvD/Edd family. Homodimer. The cofactor is [2Fe-2S] cluster. Mg(2+) is required as a cofactor.

It carries out the reaction (2R)-2,3-dihydroxy-3-methylbutanoate = 3-methyl-2-oxobutanoate + H2O. The catalysed reaction is (2R,3R)-2,3-dihydroxy-3-methylpentanoate = (S)-3-methyl-2-oxopentanoate + H2O. Its pathway is amino-acid biosynthesis; L-isoleucine biosynthesis; L-isoleucine from 2-oxobutanoate: step 3/4. The protein operates within amino-acid biosynthesis; L-valine biosynthesis; L-valine from pyruvate: step 3/4. Functionally, functions in the biosynthesis of branched-chain amino acids. Catalyzes the dehydration of (2R,3R)-2,3-dihydroxy-3-methylpentanoate (2,3-dihydroxy-3-methylvalerate) into 2-oxo-3-methylpentanoate (2-oxo-3-methylvalerate) and of (2R)-2,3-dihydroxy-3-methylbutanoate (2,3-dihydroxyisovalerate) into 2-oxo-3-methylbutanoate (2-oxoisovalerate), the penultimate precursor to L-isoleucine and L-valine, respectively. In Tropheryma whipplei (strain TW08/27) (Whipple's bacillus), this protein is Dihydroxy-acid dehydratase.